A 1557-amino-acid polypeptide reads, in one-letter code: Target of rapamycin complex 1 subunit KOG1 (1557 aa).

4 HEAT repeats span residues 548–586 (RHPP…WAVY), 588–625 (SLSI…IDYK), 777–814 (CMNT…GFQD), and 888–925 (RQEI…RYSN). A compositionally biased stretch (low complexity) spans 1084–1098 (SESNSDSDTQSSNTS). The tract at residues 1084-1114 (SESNSDSDTQSSNTSMKSHTSKKGPSGLYLL) is disordered. WD repeat units follow at residues 1207-1248 (NNKS…SKFS), 1252-1293 (PFGT…DTFK), 1296-1346 (SAWR…VEVD), 1350-1390 (KTSS…RDSM), 1400-1440 (KQGV…PVES), 1452-1492 (SQQK…NSFK), and 1517-1557 (TSDA…IDYF).

The protein belongs to the WD repeat RAPTOR family. In terms of assembly, the target of rapamycin complex 1 (TORC1) is composed of at least KOG1, LST8, TCO89 and either TOR1 (TORC1-A) or TOR2 (TORC1-B). Interacts with PIB2; following activation of PIB2 by glutamine or cysteine. TORC1 binds to and is inhibited by FKBP-rapamycin.

The protein localises to the cell membrane. It is found in the vacuole membrane. Its function is as follows. Component of TORC1, which regulates multiple cellular processes to control cell growth in response to environmental signals. Nutrient limitation and environmental stress signals cause inactivation of TORC1. Active TORC1 positively controls ribosome biogenesis via control of rRNA, ribosomal protein and tRNA gene expression, and rRNA processing. TORC1 positively controls protein biosynthesis by regulation of mRNA stability, translation initiation factor activity, and high-affinity amino acid permeases that serve to provide amino acids for use by the translation machinery. TORC1 also promotes growth by sequestering a number of nutrient and general stress-responsive transcription factors in the cytoplasm. TORC1 negatively controls macroautophagy, a process to recycle surplus cytoplasmic mass under nutrient starvation conditions. KOG1 may have a role in binding and recruiting substrates of TORC1. This chain is Target of rapamycin complex 1 subunit KOG1 (KOG1), found in Saccharomyces cerevisiae (strain ATCC 204508 / S288c) (Baker's yeast).